A 113-amino-acid polypeptide reads, in one-letter code: MLPHTSDTTSTFRLKTVFDLVFENRNIIYKADVVNDIIHHRLKVSLPMIKSLFYKMSEFSPYDDYYVKKILAYCLLRDESFAELHSKFCLNEDYKSVFMKNISFDKIDSIIVT.

The protein is Protein C21/B27 of Homo sapiens (Human).